Consider the following 250-residue polypeptide: Isoprenyl transferase (250 aa).

Residue D27 is part of the active site. A Mg(2+)-binding site is contributed by D27. Residues 28-31 (GNRR), W32, H48, and 76-78 (STE) contribute to the substrate site. N79 acts as the Proton acceptor in catalysis. Substrate contacts are provided by residues F80, R82, R199, and 205-207 (RVS). Residue E218 participates in Mg(2+) binding.

This sequence belongs to the UPP synthase family. Homodimer. Mg(2+) is required as a cofactor.

Catalyzes the condensation of isopentenyl diphosphate (IPP) with allylic pyrophosphates generating different type of terpenoids. The chain is Isoprenyl transferase from Chlamydia pneumoniae (Chlamydophila pneumoniae).